Consider the following 149-residue polypeptide: Calmodulin (149 aa).

EF-hand domains lie at 8–43 (EQIA…LGQN), 44–79 (PTEA…KMAD), 81–116 (DTEE…LGEK), and 117–149 (LSDE…MLSK). Residues Asp21, Asp23, Asp25, Asn27, Glu32, Asp57, Asp59, Asn61, Thr63, Glu68, Asp94, Asp96, Asn98, and Glu105 each contribute to the Ca(2+) site. Lys116 carries the post-translational modification N6,N6,N6-trimethyllysine. Residues Asp130, Asp132, Asp134, Gln136, and Glu141 each coordinate Ca(2+).

The protein belongs to the calmodulin family.

Calmodulin mediates the control of a large number of enzymes, ion channels and other proteins by Ca(2+). Among the enzymes to be stimulated by the calmodulin-Ca(2+) complex are a number of protein kinases and phosphatases. The chain is Calmodulin from Physarum polycephalum (Slime mold).